The primary structure comprises 160 residues: Large ribosomal subunit protein uL13 (160 aa).

It belongs to the universal ribosomal protein uL13 family. In terms of assembly, part of the 50S ribosomal subunit.

Functionally, this protein is one of the early assembly proteins of the 50S ribosomal subunit, although it is not seen to bind rRNA by itself. It is important during the early stages of 50S assembly. This Orientia tsutsugamushi (strain Boryong) (Rickettsia tsutsugamushi) protein is Large ribosomal subunit protein uL13.